The chain runs to 455 residues: tRNA modification GTPase MnmE (455 aa).

The (6S)-5-formyl-5,6,7,8-tetrahydrofolate site is built by Arg24, Glu81, and Lys120. The TrmE-type G domain maps to 216-378 (GMTVVIAGRP…LREHLKACMG (163 aa)). Asn226 is a binding site for K(+). Residues 226-231 (NAGKSS), 245-251 (TDIAGTT), 270-273 (DTAG), 335-338 (NKAD), and 359-361 (SAR) contribute to the GTP site. Ser230 contacts Mg(2+). Residues Thr245, Ile247, and Thr250 each coordinate K(+). Thr251 contributes to the Mg(2+) binding site. A (6S)-5-formyl-5,6,7,8-tetrahydrofolate-binding site is contributed by Lys455.

The protein belongs to the TRAFAC class TrmE-Era-EngA-EngB-Septin-like GTPase superfamily. TrmE GTPase family. In terms of assembly, homodimer. Heterotetramer of two MnmE and two MnmG subunits. Requires K(+) as cofactor.

It is found in the cytoplasm. Exhibits a very high intrinsic GTPase hydrolysis rate. Involved in the addition of a carboxymethylaminomethyl (cmnm) group at the wobble position (U34) of certain tRNAs, forming tRNA-cmnm(5)s(2)U34. In Pseudomonas paraeruginosa (strain DSM 24068 / PA7) (Pseudomonas aeruginosa (strain PA7)), this protein is tRNA modification GTPase MnmE.